An 83-amino-acid chain; its full sequence is Mitochondrial import inner membrane translocase subunit Tim8 B (83 aa).

Position 2 is an N-acetylalanine (Ala2). The Twin CX3C motif signature appears at 36–59; sequence CWDKCVEKPGNRLDSRTENCLSSC. 2 disulfides stabilise this stretch: Cys36–Cys59 and Cys40–Cys55.

Belongs to the small Tim family. Heterohexamer; possibly composed of 3 copies of TIMM8B and 3 copies of TIMM13, named soluble 70 kDa complex. Associates with the TIM22 complex, whose core is composed of TIMM22.

The protein localises to the mitochondrion inner membrane. Its function is as follows. Probable mitochondrial intermembrane chaperone that participates in the import and insertion of some multi-pass transmembrane proteins into the mitochondrial inner membrane. Also required for the transfer of beta-barrel precursors from the TOM complex to the sorting and assembly machinery (SAM complex) of the outer membrane. Acts as a chaperone-like protein that protects the hydrophobic precursors from aggregation and guide them through the mitochondrial intermembrane space. The sequence is that of Mitochondrial import inner membrane translocase subunit Tim8 B (TIMM8B) from Bos taurus (Bovine).